Consider the following 254-residue polypeptide: Isoprenyl transferase (254 aa).

Asp-23 is a catalytic residue. Residue Asp-23 participates in Mg(2+) binding. Residues 24–27, Trp-28, Arg-36, His-40, and 68–70 each bind substrate; these read GNGR and STE. Asn-71 serves as the catalytic Proton acceptor. Residues Trp-72, Arg-74, Arg-191, and 197–199 each bind substrate; that span reads RIS. Glu-210 contributes to the Mg(2+) binding site.

The protein belongs to the UPP synthase family. Homodimer. Mg(2+) serves as cofactor.

In terms of biological role, catalyzes the condensation of isopentenyl diphosphate (IPP) with allylic pyrophosphates generating different type of terpenoids. In Porphyromonas gingivalis (strain ATCC BAA-308 / W83), this protein is Isoprenyl transferase.